Consider the following 740-residue polypeptide: 1,4-alpha-glucan branching enzyme GlgB (740 aa).

Residue Asp-419 is the Nucleophile of the active site. The active-site Proton donor is the Glu-472.

It belongs to the glycosyl hydrolase 13 family. GlgB subfamily. In terms of assembly, monomer.

It carries out the reaction Transfers a segment of a (1-&gt;4)-alpha-D-glucan chain to a primary hydroxy group in a similar glucan chain.. The protein operates within glycan biosynthesis; glycogen biosynthesis. Functionally, catalyzes the formation of the alpha-1,6-glucosidic linkages in glycogen by scission of a 1,4-alpha-linked oligosaccharide from growing alpha-1,4-glucan chains and the subsequent attachment of the oligosaccharide to the alpha-1,6 position. The protein is 1,4-alpha-glucan branching enzyme GlgB of Thiobacillus denitrificans (strain ATCC 25259 / T1).